A 409-amino-acid chain; its full sequence is Potassium channel subfamily K member 3 (409 aa).

The Cytoplasmic segment spans residues 1-8 (MKRQNVRT). A helical membrane pass occupies residues 9-29 (LALIVCTFTYLLVGAAVFDAL). N-linked (GlcNAc...) asparagine glycosylation is present at Asn-53. The pore-forming intramembrane region spans 78 to 101 (WRFAGSFYFAITVITTIGYGHAAP). A helical membrane pass occupies residues 108–128 (VFCMFYALLGIPLTLVMFQSL). Over 129–158 (GERINTFVRYLLHRAKRGLGMRHAEVSMAN) the chain is Cytoplasmic. The helical transmembrane segment at 159–179 (MVLIGFVSCISTLCIGAAAFS) threads the bilayer. Positions 184–207 (WTFFQAYYYCFITLTTIGFGDYVA) form an intramembrane region, pore-forming. A helical membrane pass occupies residues 223–243 (FSFVYILTGLTVIGAFLNLVV). The Cytoplasmic portion of the chain corresponds to 244–409 (LRFMTMNAED…RGLMKRRSSV (166 aa)).

It belongs to the two pore domain potassium channel (TC 1.A.1.8) family. As to quaternary structure, homodimer. Heterodimer with KCNK1. Heterodimer with KCNK9. In terms of tissue distribution, very strong expression in heart, also detected in kidney, brain, skin, testis, lung, skeletal muscle, small intestine and stomach. Not detected in liver, thymus or spleen. Expressed in adrenal glands mainly in zona glomerulosa and zona fasciculata of the cortex. Expressed at higher levels in brown and beige than in white adipocytes.

The protein resides in the cell membrane. It carries out the reaction K(+)(in) = K(+)(out). The enzyme catalyses Na(+)(in) = Na(+)(out). With respect to regulation, activated by halothane and isoflurane. Inhibited by external acidification, diacylglycerol and anandamide. Inactivated by barium. In terms of biological role, k(+) channel that conducts voltage-dependent outward rectifying currents upon membrane depolarization. Voltage sensing is coupled to K(+) electrochemical gradient in an 'ion flux gating' mode where outward but not inward ion flow opens the gate. Changes ion selectivity and becomes permeable to Na(+) ions in response to extracellular acidification. Protonation of the pH sensor His-98 stabilizes C-type inactivation conformation likely converting the channel from outward K(+)-conducting, to inward Na(+)-conducting to nonconductive state. Homo- and heterodimerizes to form functional channels with distinct regulatory and gating properties. Allows K(+) currents with fast-gating kinetics important for the repolarization and hyperpolarization phases of action potentials. In cerebellar granule cells, heteromeric KCNK3:KCNK9 channel may hyperpolarize the resting membrane potential to limit intrinsic neuronal excitability, but once the action potential threshold is reached, it may support high-frequency action potential firing and increased neuronal excitability. Dispensable for central chemosensory respiration i.e. breathing controlled by brainstem CO2/pH, it rather conducts pH-sensitive currents and controls the firing rate of serotonergic raphe neurons involved in potentiation of the respiratory chemoreflex. Additionally, imparts chemosensitivity to type 1 cells in carotid bodies which respond to a decrease in arterial oxygen pressure or an increase in carbon dioxide pressure or pH to initiate adaptive changes in pulmonary ventilation. In adrenal gland, contributes to the maintenance of a hyperpolarized resting membrane potential of aldosterone-producing cells at zona glomerulosa and limits aldosterone release as part of a regulatory mechanism that controls arterial blood pressure and electrolyte homeostasis. In brown adipocytes, mediates K(+) efflux that counteracts norepinephrine-induced membrane depolarization, limits Ca(2+) efflux and downstream cAMP and PKA signaling, ultimately attenuating lipid oxidation and adaptive thermogenesis. The chain is Potassium channel subfamily K member 3 from Mus musculus (Mouse).